The sequence spans 65 residues: Large ribosomal subunit protein bL32 (65 aa).

Positions 1-19 (MAVQKSRKTPSKRGMRRSH) are enriched in basic residues. Residues 1-32 (MAVQKSRKTPSKRGMRRSHNALTNPTLSEDQE) form a disordered region.

Belongs to the bacterial ribosomal protein bL32 family.

In Ruthia magnifica subsp. Calyptogena magnifica, this protein is Large ribosomal subunit protein bL32.